Consider the following 269-residue polypeptide: Putative pyruvate, phosphate dikinase regulatory protein (269 aa).

Residue 147–154 (GVSRTSKT) participates in ADP binding.

It belongs to the pyruvate, phosphate/water dikinase regulatory protein family. PDRP subfamily.

The catalysed reaction is N(tele)-phospho-L-histidyl/L-threonyl-[pyruvate, phosphate dikinase] + ADP = N(tele)-phospho-L-histidyl/O-phospho-L-threonyl-[pyruvate, phosphate dikinase] + AMP + H(+). It carries out the reaction N(tele)-phospho-L-histidyl/O-phospho-L-threonyl-[pyruvate, phosphate dikinase] + phosphate + H(+) = N(tele)-phospho-L-histidyl/L-threonyl-[pyruvate, phosphate dikinase] + diphosphate. Its function is as follows. Bifunctional serine/threonine kinase and phosphorylase involved in the regulation of the pyruvate, phosphate dikinase (PPDK) by catalyzing its phosphorylation/dephosphorylation. This Geotalea uraniireducens (strain Rf4) (Geobacter uraniireducens) protein is Putative pyruvate, phosphate dikinase regulatory protein.